The following is a 279-amino-acid chain: Pantothenate synthetase (279 aa).

Position 26–33 (26–33) interacts with ATP; the sequence is MGNLHEGH. The active-site Proton donor is H33. Q57 serves as a coordination point for (R)-pantoate. Q57 contributes to the beta-alanine binding site. ATP is bound at residue 144-147; sequence GKKD. Q150 serves as a coordination point for (R)-pantoate. ATP contacts are provided by residues V173 and 181–184; that span reads LSSR.

The protein belongs to the pantothenate synthetase family. In terms of assembly, homodimer.

The protein resides in the cytoplasm. It catalyses the reaction (R)-pantoate + beta-alanine + ATP = (R)-pantothenate + AMP + diphosphate + H(+). Its pathway is cofactor biosynthesis; (R)-pantothenate biosynthesis; (R)-pantothenate from (R)-pantoate and beta-alanine: step 1/1. Functionally, catalyzes the condensation of pantoate with beta-alanine in an ATP-dependent reaction via a pantoyl-adenylate intermediate. This chain is Pantothenate synthetase, found in Burkholderia thailandensis (strain ATCC 700388 / DSM 13276 / CCUG 48851 / CIP 106301 / E264).